A 147-amino-acid chain; its full sequence is Hemoglobin subunit epsilon (147 aa).

The Globin domain maps to 3–147; that stretch reads HFTAEEKAAV…VAIALAHKYH (145 aa). A phosphoserine mark is found at S14 and S51. Heme b is bound by residues H64 and H93.

The protein belongs to the globin family. Heterotetramer of two alpha chains and two epsilon chains in early embryonic hemoglobin Gower-2; two zeta chains and two epsilon chains in early embryonic hemoglobin Gower-1. Red blood cells.

In terms of biological role, the epsilon chain is a beta-type chain of early mammalian embryonic hemoglobin. The chain is Hemoglobin subunit epsilon (HBE1) from Pan troglodytes (Chimpanzee).